A 207-amino-acid polypeptide reads, in one-letter code: MDFLFYIFSSLTLISGSLVIQARNPVHSVLFLVLVFFNAAGLLVLLGLDFFALIFLVVYVGAIAVLFLFVVMMLNIRITEISEKRLRYLPVGGVLGVLFLFEICILIDNDCIPLLSYDIENTALLANYNQLSFIDWRMYLSTSHTIDALGSLLYTYYFYFFLVASLILLVAMIGAIVLTMQKGIRIKRQQVFLQNTRDFAKTIRKVA.

5 helical membrane-spanning segments follow: residues 1-21 (MDFL…LVIQ), 28-48 (SVLF…LLGL), 50-70 (FFAL…FLFV), 88-108 (YLPV…ILID), and 158-178 (FYFF…AIVL).

The protein belongs to the complex I subunit 6 family.

Its subcellular location is the mitochondrion membrane. The catalysed reaction is a ubiquinone + NADH + 5 H(+)(in) = a ubiquinol + NAD(+) + 4 H(+)(out). Its function is as follows. Core subunit of the mitochondrial membrane respiratory chain NADH dehydrogenase (Complex I) that is believed to belong to the minimal assembly required for catalysis. Complex I functions in the transfer of electrons from NADH to the respiratory chain. The immediate electron acceptor for the enzyme is believed to be ubiquinone. The sequence is that of NADH-ubiquinone oxidoreductase chain 6 (ND6) from Prototheca wickerhamii.